Consider the following 492-residue polypeptide: 3-octaprenyl-4-hydroxybenzoate carboxy-lyase (492 aa).

Asn-177 contributes to the Mn(2+) binding site. Prenylated FMN-binding positions include 180–182, 194–196, and 199–200; these read IYR, RWL, and RG. Residue Glu-243 coordinates Mn(2+). Asp-292 (proton donor) is an active-site residue.

This sequence belongs to the UbiD family. Homohexamer. Prenylated FMN is required as a cofactor. It depends on Mn(2+) as a cofactor.

Its subcellular location is the cell membrane. It carries out the reaction a 4-hydroxy-3-(all-trans-polyprenyl)benzoate + H(+) = a 2-(all-trans-polyprenyl)phenol + CO2. Its pathway is cofactor biosynthesis; ubiquinone biosynthesis. Functionally, catalyzes the decarboxylation of 3-octaprenyl-4-hydroxy benzoate to 2-octaprenylphenol, an intermediate step in ubiquinone biosynthesis. The protein is 3-octaprenyl-4-hydroxybenzoate carboxy-lyase of Neisseria gonorrhoeae (strain ATCC 700825 / FA 1090).